We begin with the raw amino-acid sequence, 306 residues long: tRNA dimethylallyltransferase (306 aa).

12–19 lines the ATP pocket; sequence GPTGTKKS.

Belongs to the IPP transferase family. As to quaternary structure, monomer. Mg(2+) serves as cofactor.

The catalysed reaction is adenosine(37) in tRNA + dimethylallyl diphosphate = N(6)-dimethylallyladenosine(37) in tRNA + diphosphate. Its function is as follows. Catalyzes the transfer of a dimethylallyl group onto the adenine at position 37 in tRNAs that read codons beginning with uridine, leading to the formation of N6-(dimethylallyl)adenosine (i(6)A). This is tRNA dimethylallyltransferase from Mycoplasmoides gallisepticum (strain R(low / passage 15 / clone 2)) (Mycoplasma gallisepticum).